Consider the following 289-residue polypeptide: Mitochondrial fission regulator 1-like (289 aa).

Position 27 is a phosphothreonine (T27). 8 positions are modified to phosphoserine: S38, S100, S107, S221, S222, S235, S258, and S270.

It belongs to the MTFR1 family. Phosphorylated by AMPK. Upon stress, phosphorylation by AMPK is sufficient to induce mitochondrial fragmentation.

The protein resides in the mitochondrion outer membrane. Mitochondrial protein required for adaptation of miochondrial dynamics to metabolic changes. Regulates mitochondrial morphology at steady state and mediates AMPK-dependent stress-induced mitochondrial fragmentation via the control of OPA1 levels. This Rattus norvegicus (Rat) protein is Mitochondrial fission regulator 1-like (Mtfr1l).